A 653-amino-acid chain; its full sequence is Chaperone protein DnaK (653 aa).

Position 198 is a phosphothreonine; by autocatalysis (Thr198). Positions Asp608–Gly617 are enriched in low complexity. Residues Asp608–Lys653 are disordered. The segment covering Met618–Gly629 has biased composition (gly residues). Residues Asp639 to Lys653 show a composition bias toward acidic residues.

This sequence belongs to the heat shock protein 70 family.

In terms of biological role, acts as a chaperone. The chain is Chaperone protein DnaK from Magnetococcus marinus (strain ATCC BAA-1437 / JCM 17883 / MC-1).